We begin with the raw amino-acid sequence, 99 residues long: Large ribosomal subunit protein eL30 (99 aa).

It belongs to the eukaryotic ribosomal protein eL30 family. In terms of assembly, part of the 50S ribosomal subunit.

The chain is Large ribosomal subunit protein eL30 from Pyrococcus furiosus (strain ATCC 43587 / DSM 3638 / JCM 8422 / Vc1).